A 457-amino-acid polypeptide reads, in one-letter code: Acetylcholine receptor subunit alpha-1-A (457 aa).

The N-terminal stretch at 1 to 20 (MDFVLTRLILLFLAATIIYS) is a signal peptide. The Extracellular segment spans residues 21-230 (SEDESRLIND…ITYHFLLQRL (210 aa)). Intrachain disulfides connect C148–C162 and C212–C213. N-linked (GlcNAc...) asparagine glycosylation occurs at N161. Transmembrane regions (helical) follow at residues 231 to 255 (PLYFIVNVVIPCLLFSFLTGLVFYL), 263 to 281 (ITLSVSVLLSLVVFLLVIV), and 297 to 316 (YMLFTMVFVIASIVITVIVI). The Cytoplasmic segment spans residues 317–428 (NTHHRSPSTH…WKFVAMVLDH (112 aa)). Residues 429–447 (LLLAVFMIVCIIGTLAIFA) traverse the membrane as a helical segment.

Belongs to the ligand-gated ion channel (TC 1.A.9) family. Acetylcholine receptor (TC 1.A.9.1) subfamily. Alpha-1/CHRNA1 sub-subfamily. One of the alpha chains that assemble within the acetylcholine receptor, a pentamer of two alpha chains, a beta, a delta, and a gamma or epsilon chains. In terms of tissue distribution, oocytes.

The protein localises to the postsynaptic cell membrane. It localises to the cell membrane. It catalyses the reaction K(+)(in) = K(+)(out). The catalysed reaction is Na(+)(in) = Na(+)(out). In terms of biological role, upon acetylcholine binding, the AChR responds by an extensive change in conformation that affects all subunits and leads to opening of an ion-conducting channel across the plasma membrane. This Xenopus laevis (African clawed frog) protein is Acetylcholine receptor subunit alpha-1-A (chrna1-a).